The chain runs to 141 residues: Nucleoside diphosphate kinase (141 aa).

6 residues coordinate ATP: Lys-11, Phe-59, Arg-87, Thr-93, Arg-104, and Asn-114. The active-site Pros-phosphohistidine intermediate is the His-117.

Belongs to the NDK family. Homotetramer. Requires Mg(2+) as cofactor.

Its subcellular location is the cytoplasm. The catalysed reaction is a 2'-deoxyribonucleoside 5'-diphosphate + ATP = a 2'-deoxyribonucleoside 5'-triphosphate + ADP. It catalyses the reaction a ribonucleoside 5'-diphosphate + ATP = a ribonucleoside 5'-triphosphate + ADP. In terms of biological role, major role in the synthesis of nucleoside triphosphates other than ATP. The ATP gamma phosphate is transferred to the NDP beta phosphate via a ping-pong mechanism, using a phosphorylated active-site intermediate. The sequence is that of Nucleoside diphosphate kinase from Verminephrobacter eiseniae (strain EF01-2).